The primary structure comprises 407 residues: GTPase Obg (407 aa).

In terms of domain architecture, Obg spans 1–159 (MKFVDEVSIR…RDLKLELKVL (159 aa)). Residues 127 to 149 (NTRFKSSTNRAPRQTTPGKPGDQ) are disordered. A compositionally biased stretch (polar residues) spans 129–143 (RFKSSTNRAPRQTTP). The region spanning 160–333 (ADVGLLGLPN…LTRDIMRYLE (174 aa)) is the OBG-type G domain. GTP is bound by residues 166–173 (GLPNAGKS), 191–195 (FTTLV), 213–216 (DIPG), 283–286 (NKCD), and 314–316 (SAI). Serine 173 and threonine 193 together coordinate Mg(2+). A disordered region spans residues 376–407 (SGVKSVHDIGDDDWDEEDVDDEDGPEIIYVRD). Over residues 385–400 (GDDDWDEEDVDDEDGP) the composition is skewed to acidic residues.

The protein belongs to the TRAFAC class OBG-HflX-like GTPase superfamily. OBG GTPase family. Monomer. It depends on Mg(2+) as a cofactor.

It is found in the cytoplasm. An essential GTPase which binds GTP, GDP and possibly (p)ppGpp with moderate affinity, with high nucleotide exchange rates and a fairly low GTP hydrolysis rate. Plays a role in control of the cell cycle, stress response, ribosome biogenesis and in those bacteria that undergo differentiation, in morphogenesis control. The protein is GTPase Obg of Pseudomonas savastanoi pv. phaseolicola (strain 1448A / Race 6) (Pseudomonas syringae pv. phaseolicola (strain 1448A / Race 6)).